Consider the following 659-residue polypeptide: Delta(6)-protoilludene synthase (659 aa).

Mg(2+)-binding residues include aspartate 91, asparagine 227, serine 231, and glutamate 235. Residues 91 to 95 (DEHTD) carry the DDXXD motif motif. Arginine 316 and tyrosine 317 together coordinate (2E,6E)-farnesyl diphosphate. Residues 528 to 586 (PQFSKTSGAPNGAHTPTTTNGSIKSNGFVSGDTNGHANGNGHVQTRSSTPSSSSSSTSS) are disordered. The span at 530 to 573 (FSKTSGAPNGAHTPTTTNGSIKSNGFVSGDTNGHANGNGHVQTR) shows a compositional bias: polar residues. Residues 574–586 (SSTPSSSSSSTSS) are compositionally biased toward low complexity.

This sequence belongs to the terpene synthase family. The cofactor is Mg(2+).

It catalyses the reaction (2E,6E)-farnesyl diphosphate = Delta(6)-protoilludene + diphosphate. Its function is as follows. Terpene cyclase that catalyzes the cyclization of farnesyl diphosphate (FPP) to delta(6)-protoilludene. This is Delta(6)-protoilludene synthase from Cyclocybe aegerita (Black poplar mushroom).